A 387-amino-acid polypeptide reads, in one-letter code: 8-amino-7-oxononanoate synthase (387 aa).

Residues Arg31 and Arg38 each contribute to the substrate site. 118 to 119 (GY) contributes to the pyridoxal 5'-phosphate binding site. His143 contributes to the substrate binding site. Pyridoxal 5'-phosphate is bound by residues Ser191, 216 to 219 (DDAH), and 236 to 239 (TLSK). Lys239 is subject to N6-(pyridoxal phosphate)lysine. A substrate-binding site is contributed by Thr348.

It belongs to the class-II pyridoxal-phosphate-dependent aminotransferase family. BioF subfamily. As to quaternary structure, homodimer. It depends on pyridoxal 5'-phosphate as a cofactor.

The enzyme catalyses 6-carboxyhexanoyl-[ACP] + L-alanine + H(+) = (8S)-8-amino-7-oxononanoate + holo-[ACP] + CO2. It functions in the pathway cofactor biosynthesis; biotin biosynthesis. Its function is as follows. Catalyzes the decarboxylative condensation of pimeloyl-[acyl-carrier protein] and L-alanine to produce 8-amino-7-oxononanoate (AON), [acyl-carrier protein], and carbon dioxide. The sequence is that of 8-amino-7-oxononanoate synthase from Methylorubrum populi (strain ATCC BAA-705 / NCIMB 13946 / BJ001) (Methylobacterium populi).